Here is a 343-residue protein sequence, read N- to C-terminus: Mesaconyl-CoA hydratase (343 aa).

The MaoC-like domain maps to 47 to 116; it reads SDEFARACGL…STVIGLKENS (70 aa). Substrate is bound by residues 60–63, 83–86, and 94–96; these read PVDE, VANL, and LKP.

The enzyme catalyses (2R,3S)-beta-methylmalyl-CoA = 2-methylfumaryl-CoA + H2O. In terms of biological role, involved in the ethylmalonyl-CoA pathway for acetate assimilation. Catalyzes the reversible hydration of mesaconyl-CoA (2-methylfumaryl-CoA) to yield beta-methylmalyl-CoA ((2R,3S)-beta-methylmalyl-CoA). This is Mesaconyl-CoA hydratase (mch) from Cereibacter sphaeroides (strain ATCC 17023 / DSM 158 / JCM 6121 / CCUG 31486 / LMG 2827 / NBRC 12203 / NCIMB 8253 / ATH 2.4.1.) (Rhodobacter sphaeroides).